We begin with the raw amino-acid sequence, 339 residues long: uncharacterized protein (339 aa).

Residues 1 to 12 are compositionally biased toward polar residues; it reads MDIDLNNQTDNN. A disordered region spans residues 1–30; that stretch reads MDIDLNNQTDNNELIVEDTENPKNPNSTNI.

This is an uncharacterized protein from Acanthamoeba polyphaga (Amoeba).